The sequence spans 203 residues: MSSEAPEPDAPASTDDERVSAQLFGEWEIGEIEYDDPSTRRYITVTPIAHTMGRHSEKQFKKSEISIVERLINRLMQTDENTGKKQQATKIVREAFDIVAERTDENPVQVLVTAVENAGPREETVRLKYGGISVPKAVDVAPQRRVDLALKFIAEGTYNDSFKTTTPVEEALAHQLIGAANYDLQAYPVSQKEEQERVAAAAR.

The interval 1-21 (MSSEAPEPDAPASTDDERVSA) is disordered.

The protein belongs to the universal ribosomal protein uS7 family. In terms of assembly, part of the 30S ribosomal subunit.

Functionally, one of the primary rRNA binding proteins, it binds directly to 16S rRNA where it nucleates assembly of the head domain of the 30S subunit. Is located at the subunit interface close to the decoding center. The sequence is that of Small ribosomal subunit protein uS7 from Natronomonas pharaonis (strain ATCC 35678 / DSM 2160 / CIP 103997 / JCM 8858 / NBRC 14720 / NCIMB 2260 / Gabara) (Halobacterium pharaonis).